Reading from the N-terminus, the 91-residue chain is MGSMSVWHWVIVAVVVMLLFGRGKVSELMGDVAKGIKAFKKGMADDETQPTNTTSVPPVGPNDPVRTLPHQGAPGTAPQQTHVPAGDHKAV.

A helical membrane pass occupies residues 1-21 (MGSMSVWHWVIVAVVVMLLFG). Residues 42–91 (GMADDETQPTNTTSVPPVGPNDPVRTLPHQGAPGTAPQQTHVPAGDHKAV) form a disordered region.

The protein belongs to the TatA/E family. The Tat system comprises two distinct complexes: a TatABC complex, containing multiple copies of TatA, TatB and TatC subunits, and a separate TatA complex, containing only TatA subunits. Substrates initially bind to the TatABC complex, which probably triggers association of the separate TatA complex to form the active translocon.

It is found in the cell inner membrane. Its function is as follows. Part of the twin-arginine translocation (Tat) system that transports large folded proteins containing a characteristic twin-arginine motif in their signal peptide across membranes. TatA could form the protein-conducting channel of the Tat system. The chain is Sec-independent protein translocase protein TatA from Methylorubrum populi (strain ATCC BAA-705 / NCIMB 13946 / BJ001) (Methylobacterium populi).